We begin with the raw amino-acid sequence, 151 residues long: Ribosome maturation factor RimP (151 aa).

Belongs to the RimP family.

The protein localises to the cytoplasm. In terms of biological role, required for maturation of 30S ribosomal subunits. The polypeptide is Ribosome maturation factor RimP (Desulfotalea psychrophila (strain LSv54 / DSM 12343)).